Here is a 454-residue protein sequence, read N- to C-terminus: Uridine kinase (454 aa).

28-35 provides a ligand contact to ATP; that stretch reads GPSGSGKT.

It belongs to the uridine kinase family.

It is found in the cytoplasm. The protein localises to the nucleus. The enzyme catalyses uridine + ATP = UMP + ADP + H(+). It catalyses the reaction cytidine + ATP = CMP + ADP + H(+). It participates in pyrimidine metabolism; CTP biosynthesis via salvage pathway; CTP from cytidine: step 1/3. The protein operates within pyrimidine metabolism; UMP biosynthesis via salvage pathway; UMP from uridine: step 1/1. Its function is as follows. Catalyzes the conversion of uridine into UMP and cytidine into CMP in the pyrimidine salvage pathway. The polypeptide is Uridine kinase (urk1) (Schizosaccharomyces pombe (strain 972 / ATCC 24843) (Fission yeast)).